Here is a 212-residue protein sequence, read N- to C-terminus: Large ribosomal subunit protein uL3 (212 aa).

Residues 127–161 are disordered; it reads NFKRGPMAHGSKNHRLPGSTGAGTTPGRVFPGKRM.

It belongs to the universal ribosomal protein uL3 family. In terms of assembly, part of the 50S ribosomal subunit. Forms a cluster with proteins L14 and L19.

Its function is as follows. One of the primary rRNA binding proteins, it binds directly near the 3'-end of the 23S rRNA, where it nucleates assembly of the 50S subunit. The polypeptide is Large ribosomal subunit protein uL3 (Thermosynechococcus vestitus (strain NIES-2133 / IAM M-273 / BP-1)).